The primary structure comprises 563 residues: MSYLLAGLRAGIERALRGAVEAARPDLGLDSGTAIPPFTVEVPREKNHGDFATNLALLLTKPARRSPRQIAEILVSHLSLPELLVKEVTVAGPGFINFRLDPNWLHGVLPEIETWGEHYGRRNLGGGRKVQVEFVSANPTGLLHMGNARGAALGDSIAALLSFVGFDVTREFYVNDAGHQVENLALSMEARYFQALGRDWPVPEDGYHGEDLIDTAGRFVAEHGDRFASGDPDERRGALLRFALEEKLAAMRATLESFGVRYDVWFSEQSLYDRGVVGETLELLKKRGHLYERDGALWFKAGAFGGDKDEVLVRRNGVPTYFAADIAYHKDKYDRGFDWVINVWGADHHGHVPRMKGALAALGYDPDALDVVIMQLVRLYRGGEIVRMSKRTGRYVTLDELLEEVGRDAARYFFVTRGADSHLDFDLDLAKSRTNENPVYYIQYAHARISSIFRQLEERGRTAPGYRKIPDVTLLKEEAERALIRRLADFPDEVAQAAYDLAPHRIAHYVHDLAGLFHHFYNAHRVLGAGDGLEEARLMLVNCTRVVLRNALTLLGVSAPERM.

The 'HIGH' region motif lies at 137–147; the sequence is ANPTGLLHMGN.

It belongs to the class-I aminoacyl-tRNA synthetase family. As to quaternary structure, monomer.

The protein localises to the cytoplasm. It catalyses the reaction tRNA(Arg) + L-arginine + ATP = L-arginyl-tRNA(Arg) + AMP + diphosphate. The sequence is that of Arginine--tRNA ligase from Desulforudis audaxviator (strain MP104C).